A 366-amino-acid chain; its full sequence is Spermine synthase (366 aa).

The residue at position 2 (alanine 2) is an N-acetylalanine. A Phosphoserine modification is found at serine 57. The PABS domain maps to 122–362 (RYWPTADGRL…ELWVFYTVWK (241 aa)). Glutamine 148 serves as a coordination point for S-adenosyl 3-(methylsulfanyl)propylamine. Residues tyrosine 177 and aspartate 201 each contribute to the spermidine site. Residues glutamate 220 and 255–256 (DC) contribute to the S-adenosyl 3-(methylsulfanyl)propylamine site. Aspartate 276 (proton acceptor) is an active-site residue. Residues tyrosine 351 and glutamate 353 each contribute to the spermidine site.

Belongs to the spermidine/spermine synthase family. Homodimer. Dimerization is mediated through the N-terminal domain and seems to be required for activity as deletion of the N-terminal domain causes complete loss of activity.

The catalysed reaction is S-adenosyl 3-(methylsulfanyl)propylamine + spermidine = spermine + S-methyl-5'-thioadenosine + H(+). It participates in amine and polyamine biosynthesis; spermine biosynthesis; spermine from spermidine: step 1/1. In terms of biological role, catalyzes the production of spermine from spermidine and decarboxylated S-adenosylmethionine (dcSAM). The chain is Spermine synthase from Homo sapiens (Human).